A 63-amino-acid chain; its full sequence is Large ribosomal subunit protein bL28 (63 aa).

It belongs to the bacterial ribosomal protein bL28 family.

The sequence is that of Large ribosomal subunit protein bL28 from Desulforudis audaxviator (strain MP104C).